The following is a 74-amino-acid chain: Translation initiation factor IF-1 (74 aa).

One can recognise an S1-like domain in the interval 1-72; that stretch reads MGKEDVIRME…TRGRIVYRKK (72 aa).

This sequence belongs to the IF-1 family. As to quaternary structure, component of the 30S ribosomal translation pre-initiation complex which assembles on the 30S ribosome in the order IF-2 and IF-3, IF-1 and N-formylmethionyl-tRNA(fMet); mRNA recruitment can occur at any time during PIC assembly.

It localises to the cytoplasm. Its function is as follows. One of the essential components for the initiation of protein synthesis. Stabilizes the binding of IF-2 and IF-3 on the 30S subunit to which N-formylmethionyl-tRNA(fMet) subsequently binds. Helps modulate mRNA selection, yielding the 30S pre-initiation complex (PIC). Upon addition of the 50S ribosomal subunit IF-1, IF-2 and IF-3 are released leaving the mature 70S translation initiation complex. The sequence is that of Translation initiation factor IF-1 from Thermotoga petrophila (strain ATCC BAA-488 / DSM 13995 / JCM 10881 / RKU-1).